Consider the following 142-residue polypeptide: Transcription antitermination protein NusB (142 aa).

It belongs to the NusB family.

Its function is as follows. Involved in transcription antitermination. Required for transcription of ribosomal RNA (rRNA) genes. Binds specifically to the boxA antiterminator sequence of the ribosomal RNA (rrn) operons. The chain is Transcription antitermination protein NusB from Thermobifida fusca (strain YX).